The chain runs to 505 residues: Deoxyguanosinetriphosphate triphosphohydrolase (505 aa).

Residues 66 to 273 (RLTHSMEVQQ…MEAADDISYC (208 aa)) form the HD domain.

It belongs to the dGTPase family. Type 1 subfamily. In terms of assembly, homotetramer. Mg(2+) serves as cofactor.

It catalyses the reaction dGTP + H2O = 2'-deoxyguanosine + triphosphate + H(+). Functionally, dGTPase preferentially hydrolyzes dGTP over the other canonical NTPs. This Salmonella paratyphi A (strain AKU_12601) protein is Deoxyguanosinetriphosphate triphosphohydrolase.